The sequence spans 1235 residues: MFSGGGGPLSPGGKSAARAASGFFAPAGPRGAGRGPPPCLRQNFYNPYLAPVGTQQKPTGPTQRHTYYSECDEFRFIAPRVLDEDAPPEKRAGVHDGHLKRAPKVYCGGDERDVLRVGSGGFWPRRSRLWGGVDHAPAGFNPTVTVFHVYDILENVEHAYGMRAAQFHARFMDAITPTGTVITLLGLTPEGHRVAVHVYGTRQYFYMNKEEVDRHLQCRAPRDLCERMAAALRESPGASFRGISADHFEAEVVERTDVYYYETRPALFYRVYVRSGRVLSYLCDNFCPAIKKYEGGVDATTRFILDNPGFVTFGWYRLKPGRNNTLAQPRAPMAFGTSSDVEFNCTADNLAIEGGMSDLPAYKLMCFDIECKAGGEDELAFPVAGHPEDLVIQISCLLYDLSTTALEHVLLFSLGSCDLPESHLNELAARGLPTPVVLEFDSEFEMLLAFMTLVKQYGPEFVTGYNIINFDWPFLLAKLTDIYKVPLDGYGRMNGRGVFRVWDIGQSHFQKRSKIKVNGMVNIDMYGIITDKIKLSSYKLNAVAEAVLKDKKKDLSYRDIPAYYATGPAQRGVIGEYCIQDSLLVGQLFFKFLPHLELSAVARLAGINITRTIYDGQQIRVFTCLLRLADQKGFILPDTQGRFRGAGGEAPKRPAAAREDEERPEEEGEDEDEREEGGGEREPEGARETAGRHVGYQGAKVLDPTSGFHVNPVVVFDFASLYPSIIQAHNLCFSTLSLRADAVAHLEAGKDYLEIEVGGRRLFFVKAHVRESLLSILLRDWLAMRKQIRSRIPQSSPEEAVLLDKQQAAIKVVCNSVYGFTGVQHGLLPCLHVAATVTTIGREMLLATREYVHARWAAFEQLLADFPEAADMRAPGPYSMRIIYGDTDSIFVLCRGLTAAGLTAMGDKMASHISRALFLPPIKLECEKTFTKLLLIAKKKYIGVIYGGKMLIKGVDLVRKNNCAFINRTSRALVDLLFYDDTVSGAAAALAERPAEEWLARPLPEGLQAFGAVLVDAHRRITDPERDIQDFVLTAELSRHPRAYTNKRLAHLTVYYKLMARRAQVPSIKDRIPYVIVAQTREVEETVARLAALRELDAAAPGDEPAPPAALPSPAKRPRETPSHADPPGGASKPRKLLVSELAEDPAYAIAHGVALNTDYYFSHLLGAACVTFKALFGNNAKITESLLKRFIPEVWHPPDDVAARLRAAGFGAVGAGATAEETRRMLHRAFDTLA.

2 disordered regions span residues 640–693 and 1098–1134; these read QGRF…AGRH and AAAP…ASKP. The span at 650 to 661 shows a compositional bias: basic and acidic residues; sequence APKRPAAAREDE. Residues 662–675 show a composition bias toward acidic residues; the sequence is ERPEEEGEDEDERE. The segment covering 676 to 691 has biased composition (basic and acidic residues); the sequence is EGGGEREPEGARETAG.

This sequence belongs to the DNA polymerase type-B family. In terms of assembly, forms a complex with the ssDNA-binding protein UL29, the DNA polymerase processivity factor, and the alkaline exonuclease. Interacts with the putative helicase-primase complex subunit UL8; this interaction may coordinate leading and lagging strand DNA synthesis at the replication fork.

Its subcellular location is the host nucleus. The catalysed reaction is DNA(n) + a 2'-deoxyribonucleoside 5'-triphosphate = DNA(n+1) + diphosphate. It carries out the reaction Endonucleolytic cleavage to 5'-phosphomonoester.. Replicates viral genomic DNA. The replication complex is composed of six viral proteins: the DNA polymerase, processivity factor, primase, primase-associated factor, helicase, and ssDNA-binding protein. Additionally, the polymerase contains an intrinsic ribonuclease H (RNase H) activity that specifically degrades RNA/DNA heteroduplexes or duplex DNA substrates in the 5' to 3' direction. Therefore, it can catalyze the excision of the RNA primers that initiate the synthesis of Okazaki fragments at a replication fork during viral DNA replication. This chain is DNA polymerase catalytic subunit, found in Human herpesvirus 1 (strain KOS) (HHV-1).